Here is a 397-residue protein sequence, read N- to C-terminus: Elongation factor Tu (397 aa).

Residues 10-206 enclose the tr-type G domain; the sequence is KPHVNIGTIG…AVDESIPDPV (197 aa). Residues 19 to 26 form a G1 region; it reads GHVDHGKT. Residue 19-26 coordinates GTP; that stretch reads GHVDHGKT. Threonine 26 contacts Mg(2+). The G2 stretch occupies residues 62 to 66; that stretch reads GITIN. The segment at 83 to 86 is G3; the sequence is DAPG. GTP contacts are provided by residues 83 to 87 and 138 to 141; these read DAPGH and NKSD. A G4 region spans residues 138–141; that stretch reads NKSD. The segment at 176 to 178 is G5; sequence SAL.

This sequence belongs to the TRAFAC class translation factor GTPase superfamily. Classic translation factor GTPase family. EF-Tu/EF-1A subfamily. As to quaternary structure, monomer.

The protein resides in the cytoplasm. It carries out the reaction GTP + H2O = GDP + phosphate + H(+). GTP hydrolase that promotes the GTP-dependent binding of aminoacyl-tRNA to the A-site of ribosomes during protein biosynthesis. The protein is Elongation factor Tu of Mycobacteroides abscessus (strain ATCC 19977 / DSM 44196 / CCUG 20993 / CIP 104536 / JCM 13569 / NCTC 13031 / TMC 1543 / L948) (Mycobacterium abscessus).